The primary structure comprises 272 residues: Cholesterol 25-hydroxylase (272 aa).

The N-linked (GlcNAc...) asparagine glycan is linked to Asn5. 3 consecutive transmembrane segments (helical) span residues 38 to 58 (FFPV…FVVL), 84 to 104 (LLPC…PVTL), and 121 to 141 (LLLL…EFFV). The region spanning 129-263 (LFCLLLFDME…FTHWDKILGT (135 aa)) is the Fatty acid hydroxylase domain. The short motif at 142–146 (WHLLH) is the Histidine box-1 element. The Histidine box-2 motif lies at 157–161 (HKVHH). N-linked (GlcNAc...) asparagine glycans are attached at residues Asn163 and Asn189. The Histidine box-3 motif lies at 238 to 244 (HHDLHHS).

This sequence belongs to the sterol desaturase family. It depends on Fe cation as a cofactor. Post-translationally, N-glycosylated.

It is found in the endoplasmic reticulum membrane. It catalyses the reaction cholesterol + AH2 + O2 = 25-hydroxycholesterol + A + H2O. The catalysed reaction is cholesterol + NADPH + O2 + H(+) = 25-hydroxycholesterol + NADP(+) + H2O. In terms of biological role, catalyzes the formation of 25-hydroxycholesterol from cholesterol, leading to repress cholesterol biosynthetic enzymes. Plays a key role in cell positioning and movement in lymphoid tissues: 25-hydroxycholesterol is an intermediate in biosynthesis of 7-alpha,25-dihydroxycholesterol (7-alpha,25-OHC), an oxysterol that acts as a ligand for the G protein-coupled receptor GPR183/EBI2, a chemotactic receptor for a number of lymphoid cells. May play an important role in regulating lipid metabolism by synthesizing a corepressor that blocks sterol regulatory element binding protein (SREBP) processing. As an interferon-stimulated gene, has broad antiviral activities against a wide range of enveloped viruses, such as vesicular stomatitis virus (VSV) and SARS coronavirus-2 (SARS-CoV-2). Its product, 25-hydroxycholesterol, activates the ER-localized enzyme ACAT to induce internalization of accessible cholesterol on the plasma membrane and restricts SARS-CoV-2 S protein-mediated fusion which inhibits virus replication. In testis, production of 25-hydroxycholesterol by macrophages plays a role in Leydig cell differentiation. Required to restrain inflammation in macrophages: production of 25-hydroxycholesterol protects macrophages from cholesterol overload, thereby preventing mitochondrial DNA release and subsequent activation of the AIM2 inflammasome. This is Cholesterol 25-hydroxylase from Homo sapiens (Human).